Here is a 342-residue protein sequence, read N- to C-terminus: Anthranilate phosphoribosyltransferase (342 aa).

Residues Gly-80, 83–84 (GD), Thr-88, 90–93 (NIST), 108–116 (KHGNRAVSS), and Ser-120 each bind 5-phospho-alpha-D-ribose 1-diphosphate. Gly-80 is an anthranilate binding site. A Mg(2+)-binding site is contributed by Ser-92. Asn-111 serves as a coordination point for anthranilate. Arg-166 contributes to the anthranilate binding site. 2 residues coordinate Mg(2+): Asp-225 and Glu-226.

The protein belongs to the anthranilate phosphoribosyltransferase family. As to quaternary structure, homodimer. It depends on Mg(2+) as a cofactor.

The enzyme catalyses N-(5-phospho-beta-D-ribosyl)anthranilate + diphosphate = 5-phospho-alpha-D-ribose 1-diphosphate + anthranilate. It functions in the pathway amino-acid biosynthesis; L-tryptophan biosynthesis; L-tryptophan from chorismate: step 2/5. Catalyzes the transfer of the phosphoribosyl group of 5-phosphorylribose-1-pyrophosphate (PRPP) to anthranilate to yield N-(5'-phosphoribosyl)-anthranilate (PRA). The sequence is that of Anthranilate phosphoribosyltransferase from Halalkalibacterium halodurans (strain ATCC BAA-125 / DSM 18197 / FERM 7344 / JCM 9153 / C-125) (Bacillus halodurans).